The chain runs to 404 residues: MSMAEDLHLEEQRPERMTLSIGPHHPATHGVLRVKLELEGETVVKAEPETGFLHTGIEKTAEHLTWNQATTVMDRMDYLSPISNNTGYVMAVEKLLGIEDRIPEKARVTRVILLELNRVASHLVGLGTGGLDYGNIGTPIFWAFELRDRILDIFEHTTGQRMNPSYMRVGGLAYDLPHNFKEMVEDFLKVAPGRIQELKDVMLHNPIFVDRAKGVSVITYEQALRYGLTGRNLRVTGSDYDVRKYYPYLGYENYDFKVPVYTDGDSWSRVAITFDEMFESLKIIRQALDNLPWDDRYIIDDRKLVLPPKQEVKHSMEALIHHFKLVHHGFDVPAGEVYVSIESPRGEIGFYVVSDGGNKPMRVRVRPPSFYAVYSLPVLLEGHLLSDMVGAIATIDPVFGEVDR.

The protein belongs to the complex I 49 kDa subunit family. NDH-1 is composed of 14 different subunits. Subunits NuoB, C, D, E, F, and G constitute the peripheral sector of the complex.

It is found in the cell membrane. The enzyme catalyses a quinone + NADH + 5 H(+)(in) = a quinol + NAD(+) + 4 H(+)(out). In terms of biological role, NDH-1 shuttles electrons from NADH, via FMN and iron-sulfur (Fe-S) centers, to quinones in the respiratory chain. The immediate electron acceptor for the enzyme in this species is believed to be a menaquinone. Couples the redox reaction to proton translocation (for every two electrons transferred, four hydrogen ions are translocated across the cytoplasmic membrane), and thus conserves the redox energy in a proton gradient. This is NADH-quinone oxidoreductase subunit D 1 from Symbiobacterium thermophilum (strain DSM 24528 / JCM 14929 / IAM 14863 / T).